The chain runs to 513 residues: Calcium-dependent protein kinase 2 (513 aa).

G2 carries the N-myristoyl glycine lipid modification. The region spanning 72–326 (YIIDEKLGQG…IEEALNHPWI (255 aa)) is the Protein kinase domain. Residues 78 to 86 (LGQGTYGCV) and K101 each bind ATP. Residue D192 is the Proton acceptor of the active site. A J domain autoinhibitory motif motif is present at residues 345-353 (NLKNFKKEN). A j domain region spans residues 345–380 (NLKNFKKENELKKIALTIIAKHLCDVEINNLRNIFI). Residues 354-363 (ELKKIALTII) carry the J domain EF-hand interaction motif motif. EF-hand domains lie at 370–405 (VEIN…IGYQ), 406–441 (KIPP…KQTY), 442–477 (LKKE…DDIE), and 480–513 (LIDK…SKKK). Ca(2+)-binding residues include D383, D385, S387, T389, and E394. D455, D457, N459, K461, E466, D493, N495, D497, E499, and E504 together coordinate Ca(2+).

It belongs to the protein kinase superfamily. Ser/Thr protein kinase family. CDPK subfamily. Monomer. The cofactor is Mg(2+). Myristoylated; myristoylation may target it to different subcellular compartments. In terms of processing, autophosphorylated in vitro.

It carries out the reaction L-seryl-[protein] + ATP = O-phospho-L-seryl-[protein] + ADP + H(+). The enzyme catalyses L-threonyl-[protein] + ATP = O-phospho-L-threonyl-[protein] + ADP + H(+). With respect to regulation, activated by calcium. Upon calcium binding to the EF-hand domains, the C-terminus of the junction domain (J domain) undergoes a conformational change which results in the dissociation of the pseudo-substrate inhibitory motif from the catalytic domain. This, in turn, may facilitate the autophosphorylation of the activation loop at Thr-232, which leads to the kinase activation. In terms of biological role, calcium-dependent protein kinase which acts as a sensor and effector of intracellular Ca(2+) levels probably in part downstream of cGMP-activated PKG kinase. During male gametogenesis in the mosquito gut, required for male exflagellation, possibly by regulating male gamete exit from the host erythrocytes. Not required for asexual blood stage proliferation. This Plasmodium falciparum (isolate K1 / Thailand) protein is Calcium-dependent protein kinase 2.